We begin with the raw amino-acid sequence, 555 residues long: Glucose-6-phosphate isomerase (555 aa).

E360 serves as the catalytic Proton donor. Catalysis depends on residues H391 and K519.

Belongs to the GPI family.

It localises to the cytoplasm. The enzyme catalyses alpha-D-glucose 6-phosphate = beta-D-fructose 6-phosphate. The protein operates within carbohydrate biosynthesis; gluconeogenesis. It functions in the pathway carbohydrate degradation; glycolysis; D-glyceraldehyde 3-phosphate and glycerone phosphate from D-glucose: step 2/4. Functionally, catalyzes the reversible isomerization of glucose-6-phosphate to fructose-6-phosphate. The polypeptide is Glucose-6-phosphate isomerase (Acinetobacter baumannii (strain AB307-0294)).